Consider the following 463-residue polypeptide: Argininosuccinate lyase (463 aa).

Belongs to the lyase 1 family. Argininosuccinate lyase subfamily.

It localises to the cytoplasm. The catalysed reaction is 2-(N(omega)-L-arginino)succinate = fumarate + L-arginine. It functions in the pathway amino-acid biosynthesis; L-arginine biosynthesis; L-arginine from L-ornithine and carbamoyl phosphate: step 3/3. The protein is Argininosuccinate lyase of Streptococcus pneumoniae (strain 70585).